The sequence spans 443 residues: ATP-dependent protease ATPase subunit HslU (443 aa).

Residues Ile-18, 60-65 (GVGKTE), Asp-256, Glu-321, and Arg-393 each bind ATP.

It belongs to the ClpX chaperone family. HslU subfamily. As to quaternary structure, a double ring-shaped homohexamer of HslV is capped on each side by a ring-shaped HslU homohexamer. The assembly of the HslU/HslV complex is dependent on binding of ATP.

Its subcellular location is the cytoplasm. Its function is as follows. ATPase subunit of a proteasome-like degradation complex; this subunit has chaperone activity. The binding of ATP and its subsequent hydrolysis by HslU are essential for unfolding of protein substrates subsequently hydrolyzed by HslV. HslU recognizes the N-terminal part of its protein substrates and unfolds these before they are guided to HslV for hydrolysis. The chain is ATP-dependent protease ATPase subunit HslU from Shigella boydii serotype 18 (strain CDC 3083-94 / BS512).